The primary structure comprises 541 residues: Atlastin-3 (541 aa).

Residues 1 to 22 form a disordered region; it reads MLSPQRTAAVASRGAGDAMENG. The N-terminal hypervariable region (HVR) stretch occupies residues 1-25; the sequence is MLSPQRTAAVASRGAGDAMENGKPG. The Cytoplasmic segment spans residues 1–445; that stretch reads MLSPQRTAAV…NVFSTFRTPA (445 aa). The GB1/RHD3-type G domain maps to 57–305; the sequence is DLDVVVVSVA…LIPYVLNPSK (249 aa). GDP is bound by residues Arg70, Lys71, Gly72, Lys73, Ser74, Phe75, and Arg109. Asp142 provides a ligand contact to Mg(2+). Residues Arg213, Asp214, Val272, and Ser275 each coordinate GDP. Residues 343–434 form a 3HB (three-helix bundle) domain region; the sequence is MLQATAEANN…YENFCKHNGS (92 aa). Lys391 carries the N6-acetyllysine modification. A helical transmembrane segment spans residues 446-466; sequence VLFTGIAALYIASGFTGFIGL. Residue Glu467 is a topological domain, lumenal. The helical transmembrane segment at 468–488 threads the bilayer; sequence VVAQLFNCMVGLLLIALLTWG. Topologically, residues 489-541 are cytoplasmic; the sequence is YIRYSGQYRELGGAIDSGAAYVLEQASSHIGNSTQAAVRDAVVGRPPADKKSQ.

Belongs to the TRAFAC class dynamin-like GTPase superfamily. GB1/RHD3 GTPase family. GB1 subfamily. In terms of assembly, monomeric and homodimeric. The homodimer, transiently formed by two molecules on opposing membranes, is the active form mediating ER membrane fusion. Interacts with ZFYVE27; both proteins are involved in endoplasmic reticulum tubular network organization. Interacts with REEP5; both proteins are involved in endoplasmic reticulum tubular network organization. As to expression, expressed in cardiomyocytes (at protein level).

It localises to the endoplasmic reticulum membrane. It catalyses the reaction GTP + H2O = GDP + phosphate + H(+). Functionally, atlastin-3 (ATL3) is a membrane-anchored GTPase that mediates the GTP-dependent fusion of endoplasmic reticulum (ER) membranes, maintaining the continuous ER network. It facilitates the formation of three-way junctions where ER tubules intersect. Two atlastin-3 on neighboring ER tubules bind GTP and form loose homodimers through the GB1/RHD3-type G domains and 3HB regions. Upon GTP hydrolysis, the 3HB regions tighten, pulling the membranes together to drive their fusion. After fusion, the homodimer disassembles upon release of inorganic phosphate (Pi). Subsequently, GDP dissociates, resetting the monomers to a conformation ready for a new fusion cycle. This Mus musculus (Mouse) protein is Atlastin-3.